The primary structure comprises 489 residues: Glutamate--tRNA ligase (489 aa).

The short motif at 12 to 22 (PSPTGIPHVGM) is the 'HIGH' region element. The 'KMSKS' region signature appears at 256–260 (KLSKR). Lys-259 is a binding site for ATP.

It belongs to the class-I aminoacyl-tRNA synthetase family. Glutamate--tRNA ligase type 1 subfamily. As to quaternary structure, monomer.

The protein resides in the cytoplasm. The catalysed reaction is tRNA(Glu) + L-glutamate + ATP = L-glutamyl-tRNA(Glu) + AMP + diphosphate. Catalyzes the attachment of glutamate to tRNA(Glu) in a two-step reaction: glutamate is first activated by ATP to form Glu-AMP and then transferred to the acceptor end of tRNA(Glu). The chain is Glutamate--tRNA ligase from Mycobacterium ulcerans (strain Agy99).